Reading from the N-terminus, the 187-residue chain is MAEDIEIDLDDLERRMKGAMDSLRAEFASLRTGRASASMVEPVQVEAYGQMTPINQVGTVNVPEPRMVTINVWDKGMVGKVEKAIRESGLGINPQTNGTIIMLPIPELNEERRRELTKVAAQYAEHARVAIRNVRRDGMDQIKKGKANGMPEDDQKFWETAVQELTDKSIGNVDQALEAKQAEIMQV.

This sequence belongs to the RRF family.

The protein resides in the cytoplasm. Its function is as follows. Responsible for the release of ribosomes from messenger RNA at the termination of protein biosynthesis. May increase the efficiency of translation by recycling ribosomes from one round of translation to another. The sequence is that of Ribosome-recycling factor from Paracoccus zeaxanthinifaciens.